A 207-amino-acid chain; its full sequence is High frequency lysogenization protein HflD homolog (207 aa).

It belongs to the HflD family.

It is found in the cytoplasm. The protein resides in the cell inner membrane. This chain is High frequency lysogenization protein HflD homolog, found in Pseudomonas fluorescens (strain ATCC BAA-477 / NRRL B-23932 / Pf-5).